The chain runs to 182 residues: MFPMITGFMNYGQQTVRAARYIGQSFMITLSHTNRLPVTIQYPYEKLLTSERFRGRIHFEFDKCIACEVCVRVCPIDLPVVDWKLETYIRKKRLLNYSIDFGICIFCGNCVEYCPTNCLSMTEEYELSTYDRHELNYNQIALGRLPMSAIGDYTIRTIMNSPQTKIKTSMDKPFDSRTITNH.

2 4Fe-4S ferredoxin-type domains span residues 55-84 and 95-124; these read GRIH…VDWK and LNYS…MTEE. Residues C64, C67, C70, C74, C104, C107, C110, and C114 each coordinate [4Fe-4S] cluster.

Belongs to the complex I 23 kDa subunit family. In terms of assembly, NDH is composed of at least 16 different subunits, 5 of which are encoded in the nucleus. Requires [4Fe-4S] cluster as cofactor.

The protein resides in the plastid. It is found in the chloroplast thylakoid membrane. It catalyses the reaction a plastoquinone + NADH + (n+1) H(+)(in) = a plastoquinol + NAD(+) + n H(+)(out). The catalysed reaction is a plastoquinone + NADPH + (n+1) H(+)(in) = a plastoquinol + NADP(+) + n H(+)(out). Functionally, NDH shuttles electrons from NAD(P)H:plastoquinone, via FMN and iron-sulfur (Fe-S) centers, to quinones in the photosynthetic chain and possibly in a chloroplast respiratory chain. The immediate electron acceptor for the enzyme in this species is believed to be plastoquinone. Couples the redox reaction to proton translocation, and thus conserves the redox energy in a proton gradient. The chain is NAD(P)H-quinone oxidoreductase subunit I, chloroplastic from Buxus microphylla (Littleleaf boxwood).